The primary structure comprises 219 residues: Large ribosomal subunit protein uL16 (219 aa).

It belongs to the universal ribosomal protein uL16 family. In terms of assembly, component of the small ribosomal subunit. Mature ribosomes consist of a small (40S) and a large (60S) subunit. The 40S subunit contains about 33 different proteins and 1 molecule of RNA (18S). The 60S subunit contains about 49 different proteins and 3 molecules of RNA (25S, 5.8S and 5S).

This Encephalitozoon cuniculi (strain GB-M1) (Microsporidian parasite) protein is Large ribosomal subunit protein uL16 (RPL10).